The chain runs to 564 residues: Urocanate hydratase (564 aa).

NAD(+) contacts are provided by residues 58–59, Gln136, 182–184, Glu202, Arg207, 245–246, 266–270, 276–277, and Tyr325; these read GG, GMG, NA, QTSAH, and YL. Residue Cys413 is part of the active site. Residue Gly495 coordinates NAD(+).

It belongs to the urocanase family. NAD(+) is required as a cofactor.

It localises to the cytoplasm. It carries out the reaction 4-imidazolone-5-propanoate = trans-urocanate + H2O. It participates in amino-acid degradation; L-histidine degradation into L-glutamate; N-formimidoyl-L-glutamate from L-histidine: step 2/3. Functionally, catalyzes the conversion of urocanate to 4-imidazolone-5-propionate. In Vibrio atlanticus (strain LGP32) (Vibrio splendidus (strain Mel32)), this protein is Urocanate hydratase.